We begin with the raw amino-acid sequence, 661 residues long: Galactan 5-O-arabinofuranosyltransferase (661 aa).

The next 13 membrane-spanning stretches (helical) occupy residues leucine 26–glycine 46, valine 64–leucine 84, alanine 108–isoleucine 128, alanine 194–tryptophan 214, isoleucine 217–alanine 237, proline 243–alanine 263, glycine 265–threonine 285, leucine 286–valine 306, proline 312–glycine 332, valine 362–valine 382, methionine 393–leucine 413, leucine 418–isoleucine 438, and threonine 458–alanine 478.

It belongs to the glycosyltransferase 85 family.

Its subcellular location is the cell membrane. It carries out the reaction Adds an alpha-D-arabinofuranosyl group from trans,octacis-decaprenylphospho-beta-D-arabinofuranose at the 5-O-position of the eighth, tenth and twelfth galactofuranose unit of the galactofuranan chain of [beta-D-galactofuranosyl-(1-&gt;5)-beta-D-galactofuranosyl-(1-&gt;6)]14-beta-D-galactofuranosyl-(1-&gt;5)-beta-D-galactofuranosyl-(1-&gt;4)-alpha-L-rhamnopyranosyl-(1-&gt;3)-N-acetyl-alpha-D-glucosaminyl-diphospho-trans,octacis-decaprenol.. The protein operates within cell wall biogenesis; cell wall polysaccharide biosynthesis. In terms of biological role, involved in the biosynthesis of the arabinogalactan (AG) region of the mycolylarabinogalactan-peptidoglycan (mAGP) complex, an essential component of the cell wall. Catalyzes the addition of the first key arabinofuranosyl (Araf) residue from the sugar donor decaprenyl-phospho-arabinose (DPA) on the C-5 of a 6-linked galactofuranosyl (Galf) of the galactan domain, thus 'priming' the galactan for further elaboration by other arabinofuranosyltransferases. The polypeptide is Galactan 5-O-arabinofuranosyltransferase (Corynebacterium glutamicum (strain ATCC 13032 / DSM 20300 / JCM 1318 / BCRC 11384 / CCUG 27702 / LMG 3730 / NBRC 12168 / NCIMB 10025 / NRRL B-2784 / 534)).